The sequence spans 652 residues: DNA ligase (652 aa).

Residues 29 to 33 (DSEYD), 78 to 79 (SL), and Glu107 contribute to the NAD(+) site. Lys109 acts as the N6-AMP-lysine intermediate in catalysis. Residues Arg130, Glu164, Lys278, and Lys302 each contribute to the NAD(+) site. Zn(2+)-binding residues include Cys395, Cys398, Cys413, and Cys418. The 76-residue stretch at 577–652 (VADAALSGLT…VRDEAWLESL (76 aa)) folds into the BRCT domain.

The protein belongs to the NAD-dependent DNA ligase family. LigA subfamily. The cofactor is Mg(2+). Mn(2+) serves as cofactor.

The enzyme catalyses NAD(+) + (deoxyribonucleotide)n-3'-hydroxyl + 5'-phospho-(deoxyribonucleotide)m = (deoxyribonucleotide)n+m + AMP + beta-nicotinamide D-nucleotide.. Functionally, DNA ligase that catalyzes the formation of phosphodiester linkages between 5'-phosphoryl and 3'-hydroxyl groups in double-stranded DNA using NAD as a coenzyme and as the energy source for the reaction. It is essential for DNA replication and repair of damaged DNA. This Streptococcus pneumoniae (strain Hungary19A-6) protein is DNA ligase.